A 110-amino-acid polypeptide reads, in one-letter code: Large ribosomal subunit protein uL22 (110 aa).

It belongs to the universal ribosomal protein uL22 family. In terms of assembly, part of the 50S ribosomal subunit.

This protein binds specifically to 23S rRNA; its binding is stimulated by other ribosomal proteins, e.g. L4, L17, and L20. It is important during the early stages of 50S assembly. It makes multiple contacts with different domains of the 23S rRNA in the assembled 50S subunit and ribosome. Functionally, the globular domain of the protein is located near the polypeptide exit tunnel on the outside of the subunit, while an extended beta-hairpin is found that lines the wall of the exit tunnel in the center of the 70S ribosome. The polypeptide is Large ribosomal subunit protein uL22 (Haemophilus ducreyi (strain 35000HP / ATCC 700724)).